Here is a 691-residue protein sequence, read N- to C-terminus: Elongation factor G (691 aa).

One can recognise a tr-type G domain in the interval lysine 12 to leucine 286. GTP-binding positions include alanine 21 to threonine 28, aspartate 85 to histidine 89, and asparagine 139 to aspartate 142.

It belongs to the TRAFAC class translation factor GTPase superfamily. Classic translation factor GTPase family. EF-G/EF-2 subfamily.

It is found in the cytoplasm. Its function is as follows. Catalyzes the GTP-dependent ribosomal translocation step during translation elongation. During this step, the ribosome changes from the pre-translocational (PRE) to the post-translocational (POST) state as the newly formed A-site-bound peptidyl-tRNA and P-site-bound deacylated tRNA move to the P and E sites, respectively. Catalyzes the coordinated movement of the two tRNA molecules, the mRNA and conformational changes in the ribosome. The protein is Elongation factor G of Thermosipho africanus (strain TCF52B).